Here is a 496-residue protein sequence, read N- to C-terminus: Flt3-interacting zinc finger protein 1 (496 aa).

An N-acetylmethionine modification is found at M1. 6 consecutive C2H2-type zinc fingers follow at residues 23–45, 51–73, 79–101, 107–130, 200–222, and 228–250; these read FHCS…FARH, HACP…LRSH, YRCS…QVVH, YCCL…KRQH, FACG…WAAH, and FKCP…KLTH. The segment at 250 to 280 is disordered; the sequence is HDLQGPGAPPAQAWAAGPGAGPETAGEGTAA. Residues 259-280 are compositionally biased toward low complexity; it reads PAQAWAAGPGAGPETAGEGTAA. C2H2-type zinc fingers lie at residues 331 to 352, 358 to 381, 414 to 436, 442 to 464, and 470 to 492; these read YQCD…LEAH, YGCG…RVSH, FGCS…VLVH, FPCL…RLLH, and FPCH…LKLH. Residues 378–412 form a disordered region; that stretch reads RVSHGEGGGEEAATAAREREPASGEPPSGSGRGKK.

In terms of assembly, interacts with FLT3 cytoplasmic catalytic domain, following receptor stimulation, in a kinase-independent manner. Does not interact with other structurally related receptor tyrosine kinases, including KIT, CSF1R and PDGFR. Interacts with NRL. Widely expressed.

It is found in the cytoplasm. The protein localises to the nucleus. May be a transcriptional repressor of NRL function in photoreceptors. Does not repress CRX-mediated transactivation. This chain is Flt3-interacting zinc finger protein 1 (FIZ1), found in Homo sapiens (Human).